The sequence spans 130 residues: Small ribosomal subunit protein uS8 (130 aa).

The protein belongs to the universal ribosomal protein uS8 family. In terms of assembly, part of the 30S ribosomal subunit. Contacts proteins S5 and S12.

In terms of biological role, one of the primary rRNA binding proteins, it binds directly to 16S rRNA central domain where it helps coordinate assembly of the platform of the 30S subunit. In Ectopseudomonas mendocina (strain ymp) (Pseudomonas mendocina), this protein is Small ribosomal subunit protein uS8.